Here is a 118-residue protein sequence, read N- to C-terminus: DNA-binding protein MmarC6_0793 (118 aa).

Residues 1 to 12 (MNPEEIRQRRLQ) are compositionally biased toward basic and acidic residues. A disordered region spans residues 1–33 (MNPEEIRQRRLQEMQAKAQEQGAQDPEAQRQMQ). The segment covering 24 to 33 (QDPEAQRQMQ) has biased composition (low complexity).

Belongs to the PDCD5 family.

In Methanococcus maripaludis (strain C6 / ATCC BAA-1332), this protein is DNA-binding protein MmarC6_0793.